Consider the following 652-residue polypeptide: Aorsin (652 aa).

A signal peptide spans 1 to 22 (MRPLSHLSFFNGLLLGLSALSA). Positions 23 to 215 (ATSVVHERRE…PRPIQQHDVK (193 aa)) are cleaved as a propeptide — removed in mature form. N-linked (GlcNAc...) asparagine glycosylation occurs at Asn112. The disordered stretch occupies residues 177–211 (VNLNPSSGKPSSIRRRAAASKKTKLPARGPRPIQQ). The segment covering 188–201 (SIRRRAAASKKTKL) has biased composition (basic residues). Residues Asn218 and Asn247 are each glycosylated (N-linked (GlcNAc...) asparagine). In terms of domain architecture, Peptidase S53 spans 225 to 651 (LITPECIRAL…PKMLKLWLDL (427 aa)). Catalysis depends on charge relay system residues Glu301 and Asp305. Residues Asn331 and Asn445 are each glycosylated (N-linked (GlcNAc...) asparagine). Ser569 acts as the Charge relay system in catalysis. Ca(2+) contacts are provided by Asp610 and Ile611. N-linked (GlcNAc...) asparagine glycosylation occurs at Asn613. Ca(2+) contacts are provided by Gly629 and Asp631.

The cofactor is Ca(2+). In terms of processing, N-glycosylated. O-glycosylated.

The protein resides in the secreted. The protein localises to the extracellular space. Inhibited by antipain and leupeptin. Serine endopeptidase which hydrolyzes a range of fluorogenic peptide substrates containing the basic residues arginine or lysine at the P1 position and prefers paired basic resides. Also hydrolyzes clupeine and salmine, activates plasminogen and converts trypsinogen to trypsin. The sequence is that of Aorsin from Aspergillus oryzae (strain ATCC 42149 / RIB 40) (Yellow koji mold).